Consider the following 136-residue polypeptide: Holo-[acyl-carrier-protein] synthase (136 aa).

Residues Asp-8 and Glu-58 each coordinate Mg(2+).

Belongs to the P-Pant transferase superfamily. AcpS family. It depends on Mg(2+) as a cofactor.

The protein localises to the cytoplasm. The catalysed reaction is apo-[ACP] + CoA = holo-[ACP] + adenosine 3',5'-bisphosphate + H(+). Transfers the 4'-phosphopantetheine moiety from coenzyme A to a Ser of acyl-carrier-protein. The protein is Holo-[acyl-carrier-protein] synthase of Leuconostoc mesenteroides subsp. mesenteroides (strain ATCC 8293 / DSM 20343 / BCRC 11652 / CCM 1803 / JCM 6124 / NCDO 523 / NBRC 100496 / NCIMB 8023 / NCTC 12954 / NRRL B-1118 / 37Y).